Reading from the N-terminus, the 252-residue chain is uncharacterized protein (252 aa).

An N-terminal signal peptide occupies residues 1–20 (MIATLGNLIIPVIFVNYVAS).

The protein belongs to the ascovirus HvAV ORF17 family.

This is an uncharacterized protein from Spodoptera frugiperda ascovirus 1a (SfAV-1a).